Consider the following 1239-residue polypeptide: Anion exchange protein 2 (1239 aa).

The segment at 1–237 (MSSAPRRPAK…HRSYNLQERR (237 aa)) is disordered. Residues 1-706 (MSSAPRRPAK…DFRDALDPQC (706 aa)) are Cytoplasmic-facing. 2 stretches are compositionally biased toward basic and acidic residues: residues 37 to 49 (ELHR…RFEE) and 58 to 75 (GGEE…EYHR). Composition is skewed to basic residues over residues 76–85 (QSSHHIHHPL) and 94–110 (RRRK…RRRP). Residues serine 113, serine 132, serine 144, serine 170, and serine 172 each carry the phosphoserine modification. A compositionally biased stretch (acidic residues) spans 120 to 133 (TIEEGEEDEDEASE). Residues 141-155 (TQPSPVSTPSSVQFF) are compositionally biased toward low complexity. The span at 189–207 (GAQAGTQVEEAEAVAVASG) shows a compositional bias: low complexity. Residues 208–217 (TAGGDDGGAS) are compositionally biased toward gly residues. Serine 241 bears the Phosphoserine mark. Position 255 is a phosphothreonine (threonine 255). Lysine 272 is modified (N6-methyllysine). Residues 285 to 318 (HLVRKNAKGSTQSGREGREPGPTPRARPRAPHKP) form a disordered region. Serine 441 is modified (phosphoserine). Residues 447–468 (SLLGHHHGQGAESDPHVTEPLI) form a disordered region. Membrane (anion exchange) regions lie at residues 706–1239 (CLAA…PMPV) and 708–1239 (AAVI…PMPV). 4 consecutive transmembrane segments (helical) span residues 707-727 (LAAV…FGGL), 752-772 (FCLL…LLVF), 794-814 (IGFW…SFLV), and 824-844 (IFAF…LVKI). The Extracellular segment spans residues 845–895 (FQEHPLHGCSASNSSEVDGGENMTWAVARPTLGPGNRSLAGQSGQGKPRGQ). N-linked (GlcNAc...) asparagine glycans are attached at residues asparagine 857, asparagine 866, and asparagine 880. A helical transmembrane segment spans residues 896 to 916 (PNTALLSLVLMAGTFFIAFFL). At 917–931 (RKFKNSRFFPGRIRR) the chain is on the cytoplasmic side. Transmembrane regions (helical) follow at residues 932–952 (VIGD…DYSI), 987–1007 (FPVW…ILIF), 1034–1054 (LLLI…WLAA), 1088–1108 (RVTG…GDLL), and 1111–1131 (IPLA…LNGI). The S-palmitoyl cysteine moiety is linked to residue cysteine 1171. Residues 1172 to 1192 (LALLWAVMSTAASLAFPFILI) traverse the membrane as a helical segment.

Belongs to the anion exchanger (TC 2.A.31) family.

The protein resides in the apical cell membrane. The protein localises to the basolateral cell membrane. It carries out the reaction hydrogencarbonate(in) + chloride(out) = hydrogencarbonate(out) + chloride(in). Its function is as follows. Sodium-independent anion exchanger which mediates the electroneutral exchange of chloride for bicarbonate ions across the cell membrane. Plays an important role in osteoclast differentiation and function. Regulates bone resorption and calpain-dependent actin cytoskeleton organization in osteoclasts via anion exchange-dependent control of pH. Essential for intracellular pH regulation in CD8(+) T-cells upon CD3 stimulation, modulating CD8(+) T-cell response. This chain is Anion exchange protein 2 (SLC4A2), found in Pongo abelii (Sumatran orangutan).